Consider the following 208-residue polypeptide: Large ribosomal subunit protein uL3 (208 aa).

The tract at residues 124–146 (HGQSRGPMAHGSRYHRRPGSMGP) is disordered.

Belongs to the universal ribosomal protein uL3 family. Part of the 50S ribosomal subunit. Forms a cluster with proteins L14 and L19.

In terms of biological role, one of the primary rRNA binding proteins, it binds directly near the 3'-end of the 23S rRNA, where it nucleates assembly of the 50S subunit. The sequence is that of Large ribosomal subunit protein uL3 from Streptococcus thermophilus (strain ATCC BAA-491 / LMD-9).